Here is a 218-residue protein sequence, read N- to C-terminus: YlmG homolog protein 1-2, chloroplastic (218 aa).

A chloroplast-targeting transit peptide spans 1–83 (MASFTTNSLA…TRSITTLVLL (83 aa)). A run of 2 helical transmembrane segments spans residues 133–153 (LTVVAAGLSKWLDIYSGVLMV) and 187–207 (IIPPVFDTLDVSPLLAFAVLG).

This sequence belongs to the YggT family.

The protein resides in the plastid. It localises to the chloroplast thylakoid membrane. In terms of biological role, not required for the biogenesis and accumulation of native cytochrome b6 in the thylakoid membrane. Not functionally involved in the pathway for covalent binding of the c-type heme to cytochrome b6. This chain is YlmG homolog protein 1-2, chloroplastic, found in Arabidopsis thaliana (Mouse-ear cress).